Here is a 380-residue protein sequence, read N- to C-terminus: Cytochrome b (380 aa).

The next 4 membrane-spanning stretches (helical) occupy residues 34-54 (FGSL…LLAM), 78-99 (WLIR…YLHI), 114-134 (WNTG…GYVL), and 179-199 (FFAL…IHLT). 2 residues coordinate heme b: His-84 and His-98. Residues His-183 and His-197 each contribute to the heme b site. His-202 serves as a coordination point for a ubiquinone. 4 consecutive transmembrane segments (helical) span residues 227–247 (LKDI…ALFS), 289–309 (LGGV…PFLH), 321–341 (ISQL…WVGS), and 348–368 (FIII…ILFP).

This sequence belongs to the cytochrome b family. The cytochrome bc1 complex contains 11 subunits: 3 respiratory subunits (MT-CYB, CYC1 and UQCRFS1), 2 core proteins (UQCRC1 and UQCRC2) and 6 low-molecular weight proteins (UQCRH/QCR6, UQCRB/QCR7, UQCRQ/QCR8, UQCR10/QCR9, UQCR11/QCR10 and a cleavage product of UQCRFS1). This cytochrome bc1 complex then forms a dimer. Requires heme b as cofactor.

It is found in the mitochondrion inner membrane. Its function is as follows. Component of the ubiquinol-cytochrome c reductase complex (complex III or cytochrome b-c1 complex) that is part of the mitochondrial respiratory chain. The b-c1 complex mediates electron transfer from ubiquinol to cytochrome c. Contributes to the generation of a proton gradient across the mitochondrial membrane that is then used for ATP synthesis. This chain is Cytochrome b (MT-CYB), found in Puffinus opisthomelas (Black-vented shearwater).